The primary structure comprises 115 residues: Ribonuclease P protein component (115 aa).

The protein belongs to the RnpA family. As to quaternary structure, consists of a catalytic RNA component (M1 or rnpB) and a protein subunit.

It catalyses the reaction Endonucleolytic cleavage of RNA, removing 5'-extranucleotides from tRNA precursor.. In terms of biological role, RNaseP catalyzes the removal of the 5'-leader sequence from pre-tRNA to produce the mature 5'-terminus. It can also cleave other RNA substrates such as 4.5S RNA. The protein component plays an auxiliary but essential role in vivo by binding to the 5'-leader sequence and broadening the substrate specificity of the ribozyme. The polypeptide is Ribonuclease P protein component (Staphylococcus aureus (strain Mu3 / ATCC 700698)).